The following is an 84-amino-acid chain: Large ribosomal subunit protein bL27 (84 aa).

Residues 1–25 (MAHKKAGGSSKNGRDSAGKRLGVKR) are disordered.

It belongs to the bacterial ribosomal protein bL27 family.

This is Large ribosomal subunit protein bL27 from Syntrophotalea carbinolica (strain DSM 2380 / NBRC 103641 / GraBd1) (Pelobacter carbinolicus).